The chain runs to 48 residues: Phospholipase A2 TI-Nh (48 aa).

The active site involves His25. Asp26 is a Ca(2+) binding site.

The protein belongs to the phospholipase A2 family. Group I subfamily. D49 sub-subfamily. Monomer. Ca(2+) serves as cofactor. As to expression, expressed by the venom gland.

It localises to the secreted. The enzyme catalyses a 1,2-diacyl-sn-glycero-3-phosphocholine + H2O = a 1-acyl-sn-glycero-3-phosphocholine + a fatty acid + H(+). Its function is as follows. Phospholipase A2 with weak enzymatic activity, which partially inhibits thrombin enzymatic activity (Ki=73 nM), completely inhibits thrombin-induced platelet aggregation and retards fibrin clot formation (IC(50)=0.2 nM). May exert this anticoagulant effect through a non-enzymatic mechanism. This chain is Phospholipase A2 TI-Nh, found in Naja haje haje (Egyptian cobra).